The following is a 429-amino-acid chain: Adenylosuccinate synthetase (429 aa).

GTP contacts are provided by residues 12–18 (GDEGKGK) and 40–42 (GHT). Asp13 acts as the Proton acceptor in catalysis. Mg(2+)-binding residues include Asp13 and Gly40. IMP contacts are provided by residues 13-16 (DEGK), 38-41 (NAGH), Thr128, Arg142, Gln223, Thr238, and Arg302. The active-site Proton donor is His41. 298 to 304 (VNTGRKR) lines the substrate pocket. GTP contacts are provided by residues Arg304, 330-332 (KLD), and 412-414 (GVG).

The protein belongs to the adenylosuccinate synthetase family. As to quaternary structure, homodimer. It depends on Mg(2+) as a cofactor.

Its subcellular location is the cytoplasm. The catalysed reaction is IMP + L-aspartate + GTP = N(6)-(1,2-dicarboxyethyl)-AMP + GDP + phosphate + 2 H(+). It participates in purine metabolism; AMP biosynthesis via de novo pathway; AMP from IMP: step 1/2. Its function is as follows. Plays an important role in the de novo pathway of purine nucleotide biosynthesis. Catalyzes the first committed step in the biosynthesis of AMP from IMP. The protein is Adenylosuccinate synthetase of Corynebacterium diphtheriae (strain ATCC 700971 / NCTC 13129 / Biotype gravis).